A 602-amino-acid polypeptide reads, in one-letter code: Glutamyl-tRNA(Gln) amidotransferase subunit B, mitochondrial (602 aa).

Residues 1 to 52 (MLQQWLRQSPAAAGLLRCSRYRGPQAALLQLSPQRAPTYHAIRSLQTSAAES) constitute a mitochondrion transit peptide. The tract at residues 61–83 (QLKQGAKGLKAQKRQRRESEEAS) is disordered.

The protein belongs to the GatB/GatE family. GatB subfamily. Subunit of the heterotrimeric GatCAB amidotransferase (AdT) complex, composed of A, B and C subunits.

Its subcellular location is the mitochondrion. It catalyses the reaction L-glutamyl-tRNA(Gln) + L-glutamine + ATP + H2O = L-glutaminyl-tRNA(Gln) + L-glutamate + ADP + phosphate + H(+). Functionally, allows the formation of correctly charged Gln-tRNA(Gln) through the transamidation of misacylated Glu-tRNA(Gln) in the mitochondria. The reaction takes place in the presence of glutamine and ATP through an activated gamma-phospho-Glu-tRNA(Gln). This Aspergillus clavatus (strain ATCC 1007 / CBS 513.65 / DSM 816 / NCTC 3887 / NRRL 1 / QM 1276 / 107) protein is Glutamyl-tRNA(Gln) amidotransferase subunit B, mitochondrial.